Here is a 324-residue protein sequence, read N- to C-terminus: Lactonase drp35 (324 aa).

Ca(2+) is bound by residues E47, S109, G111, D129, T132, Y134, D137, N184, D235, and S236. The active-site Proton donor is D235.

It belongs to the SMP-30/CGR1 family. It depends on Ca(2+) as a cofactor.

It localises to the cytoplasm. Exhibits lactonase activity. Acts in cells with perturbed membrane integrity and is possibly related to the membrane homeostasis. In Staphylococcus aureus (strain bovine RF122 / ET3-1), this protein is Lactonase drp35 (drp35).